The following is a 371-amino-acid chain: Bifunctional enzyme IspD/IspF (371 aa).

The interval 1–210 (MSEISLIMLA…LDLPTPSFEI (210 aa)) is 2-C-methyl-D-erythritol 4-phosphate cytidylyltransferase. Residues 211-371 (FTGNGFDVHE…NLKYFDWTRL (161 aa)) form a 2-C-methyl-D-erythritol 2,4-cyclodiphosphate synthase region. A divalent metal cation is bound by residues Asp-217 and His-219. 4-CDP-2-C-methyl-D-erythritol 2-phosphate is bound by residues 217-219 (DVH) and 243-244 (HS). His-251 is a binding site for a divalent metal cation. 4-CDP-2-C-methyl-D-erythritol 2-phosphate contacts are provided by residues 265 to 267 (DIG), 270 to 274 (YPDTD), 341 to 344 (TTTE), Phe-348, and Arg-351.

In the N-terminal section; belongs to the IspD/TarI cytidylyltransferase family. IspD subfamily. The protein in the C-terminal section; belongs to the IspF family. A divalent metal cation serves as cofactor.

It carries out the reaction 2-C-methyl-D-erythritol 4-phosphate + CTP + H(+) = 4-CDP-2-C-methyl-D-erythritol + diphosphate. The enzyme catalyses 4-CDP-2-C-methyl-D-erythritol 2-phosphate = 2-C-methyl-D-erythritol 2,4-cyclic diphosphate + CMP. Its pathway is isoprenoid biosynthesis; isopentenyl diphosphate biosynthesis via DXP pathway; isopentenyl diphosphate from 1-deoxy-D-xylulose 5-phosphate: step 2/6. The protein operates within isoprenoid biosynthesis; isopentenyl diphosphate biosynthesis via DXP pathway; isopentenyl diphosphate from 1-deoxy-D-xylulose 5-phosphate: step 4/6. In terms of biological role, bifunctional enzyme that catalyzes the formation of 4-diphosphocytidyl-2-C-methyl-D-erythritol from CTP and 2-C-methyl-D-erythritol 4-phosphate (MEP) (IspD), and catalyzes the conversion of 4-diphosphocytidyl-2-C-methyl-D-erythritol 2-phosphate (CDP-ME2P) to 2-C-methyl-D-erythritol 2,4-cyclodiphosphate (ME-CPP) with a corresponding release of cytidine 5-monophosphate (CMP) (IspF). This Campylobacter jejuni subsp. jejuni serotype O:23/36 (strain 81-176) protein is Bifunctional enzyme IspD/IspF.